A 535-amino-acid chain; its full sequence is Transmembrane protein 151 homolog (535 aa).

A run of 3 helical transmembrane segments spans residues 27-47 (GYGK…YATY), 73-93 (YNFV…MECW), and 254-274 (PWFL…SWPL). The segment at 498 to 535 (ASISHSSSKDLKSLTLKNNNGAANNNNNNNNENPEEQP) is disordered. The segment covering 510-529 (SLTLKNNNGAANNNNNNNNE) has biased composition (low complexity).

This sequence belongs to the TMEM151 family.

It localises to the membrane. This is Transmembrane protein 151 homolog from Caenorhabditis briggsae.